A 551-amino-acid chain; its full sequence is Steroid transmembrane transporter SLC22A24 (551 aa).

Helical transmembrane passes span 16-36 (FQIL…PHTV), 146-166 (SVAK…GGHL), 174-194 (FIVT…AFAP), 204-222 (FLTG…LLIL), 235-255 (ALIF…AFGI), 260-280 (HLQL…RWLS), 350-370 (ICLL…LLIN), 378-398 (VFLL…LGNF), 410-430 (IIFM…TQEM), 435-455 (LVLA…TAVL), 469-489 (LGVI…LMIL), and 496-516 (LPWI…LLLP). The segment at 524 to 551 (PDSIQDVENKRKSSREVKKDAVAKVTPF) is disordered. Residues 530–545 (VENKRKSSREVKKDAV) are compositionally biased toward basic and acidic residues.

As to expression, localized to the kidney. Mainly expressed in the late segments of proximal tubules.

It localises to the cell membrane. It catalyses the reaction estrone 3-sulfate(out) + glutarate(in) = estrone 3-sulfate(in) + glutarate(out). The catalysed reaction is 17beta-estradiol 17-O-(beta-D-glucuronate)(out) + glutarate(in) = 17beta-estradiol 17-O-(beta-D-glucuronate)(in) + glutarate(out). It carries out the reaction dehydroepiandrosterone 3-sulfate(out) + glutarate(in) = dehydroepiandrosterone 3-sulfate(in) + glutarate(out). Functionally, renal transmembrane organic anion/dicarboxylate exchanger that participates in the reabsorption of conjugated steroids, as well as bile acids, driven by an outward gradient of dicarboxylates such as glutarate or succinate. Transports estrone 3-sulfate and estradiol-17-glucuronide (17beta-estradiol 17-O-(beta-D-glucuronate)), but not androstanediol glucuronide (5alpha-androstane-3alpha,17beta-diol 3-O-(beta-D-glucuronate)), nor taurocholate. Prefers sulfate conjugates of steroids rather than glucuronide conjugates. The sequence is that of Steroid transmembrane transporter SLC22A24 from Rattus norvegicus (Rat).